A 1263-amino-acid chain; its full sequence is Valine--tRNA ligase (1263 aa).

An N-acetylserine modification is found at Ser-2. One can recognise a GST C-terminal domain in the interval 89–219 (GSRAAVLVQQ…YSGARSVTQQ (131 aa)). Positions 218 to 294 (QQPGSEVIAP…PGEKKDVSGA (77 aa)) are disordered. 2 stretches are compositionally biased toward basic and acidic residues: residues 234 to 248 (LKKE…EKFQ) and 259 to 274 (HGEK…KRDP). Residues 343-353 (PNVTGSLHLGH) carry the 'HIGH' region motif. Phosphoserine occurs at positions 436 and 526. Lys-644 is subject to N6-acetyllysine. The 'KMSKS' region motif lies at 861–865 (KMSKS). An ATP-binding site is contributed by Lys-864.

This sequence belongs to the class-I aminoacyl-tRNA synthetase family. In terms of assembly, forms high-molecular-mass aggregates with elongation factor 1.

It carries out the reaction tRNA(Val) + L-valine + ATP = L-valyl-tRNA(Val) + AMP + diphosphate. Its activity is regulated as follows. Can be regulated by protein kinase C-dependent phosphorylation. This is Valine--tRNA ligase (Vars1) from Mus musculus (Mouse).